The following is a 757-amino-acid chain: Glutathione biosynthesis bifunctional protein GshAB (757 aa).

The tract at residues 1-337 (MNIQQIVKEK…LGRARLGEVA (337 aa)) is glutamate--cysteine ligase. The ATP-grasp domain maps to 494–757 (KKVLAKAGFN…VLGMLFPELV (264 aa)). ATP is bound at residue 521-580 (PLFEGKAVVIKPKSTNFGLGISIFQQGVHDKADFAKAVEIAFREDKEVMVEDYLVGTEYR). The Mg(2+) site is built by D702, E723, and N725. D702, E723, and N725 together coordinate Mn(2+).

The protein in the N-terminal section; belongs to the glutamate--cysteine ligase type 1 family. Type 2 subfamily. As to quaternary structure, monomer. Mg(2+) is required as a cofactor. The cofactor is Mn(2+).

The catalysed reaction is L-cysteine + L-glutamate + ATP = gamma-L-glutamyl-L-cysteine + ADP + phosphate + H(+). The enzyme catalyses gamma-L-glutamyl-L-cysteine + glycine + ATP = glutathione + ADP + phosphate + H(+). It participates in sulfur metabolism; glutathione biosynthesis; glutathione from L-cysteine and L-glutamate: step 1/2. It functions in the pathway sulfur metabolism; glutathione biosynthesis; glutathione from L-cysteine and L-glutamate: step 2/2. Synthesizes glutathione from L-glutamate and L-cysteine via gamma-L-glutamyl-L-cysteine. In Mannheimia succiniciproducens (strain KCTC 0769BP / MBEL55E), this protein is Glutathione biosynthesis bifunctional protein GshAB.